Reading from the N-terminus, the 351-residue chain is MATWLVTGGAGFIGGNFVLEAVSRGIRVVNLDALTYAGNLNTLASLEGNADHIFVKGDIGDGALVTRLLQEHQPDAVLNFAAESHVDRSIEGPGAFIQTNVVGTLALLEAVRDYWKALPDTRRDAFRFLHVSTDEVYGTLGETGKFTETTPYAPNSPYSASKAASDHLVRAFHHTYGLPVLTTNCSNNYGPYHFPEKLIPLVIAKALAGEPLPVYGDGKQVRDWLFVSDHCEAIRTVLAKGRVGETYNVGGNSERQNIEVVQAICALLDQHRPREDGKPRESQIAYVTDRPGHDRRYAIDASKLKDELGWEPAYTFEQGIALTVDWYLTNQTWVQGVLDGSYRLERIGATV.

NAD(+) contacts are provided by residues 12–13 (FI), 32–35 (DALT), 58–59 (DI), 80–84 (FAAES), and threonine 99. Position 84 (serine 84) interacts with substrate. Threonine 133 is a substrate binding site. Catalysis depends on aspartate 134, which acts as the Proton donor. Residues glutamate 135 and tyrosine 158 each act as proton acceptor in the active site. 158-162 (YSASK) contacts NAD(+). Asparagine 187 contributes to the substrate binding site. An NAD(+)-binding site is contributed by asparagine 188. Substrate contacts are provided by residues 197–198 (KL), 213–215 (PVY), arginine 222, asparagine 257, and 289–293 (DRPGH).

The protein belongs to the NAD(P)-dependent epimerase/dehydratase family. dTDP-glucose dehydratase subfamily. In terms of assembly, homodimer. It depends on NAD(+) as a cofactor.

It catalyses the reaction dTDP-alpha-D-glucose = dTDP-4-dehydro-6-deoxy-alpha-D-glucose + H2O. Its pathway is carbohydrate biosynthesis; dTDP-L-rhamnose biosynthesis. It functions in the pathway bacterial outer membrane biogenesis; LPS O-antigen biosynthesis. In terms of biological role, catalyzes the dehydration of dTDP-D-glucose to form dTDP-6-deoxy-D-xylo-4-hexulose via a three-step process involving oxidation, dehydration and reduction. This is dTDP-glucose 4,6-dehydratase (rfbB) from Xanthomonas campestris pv. campestris (strain B100).